A 447-amino-acid polypeptide reads, in one-letter code: Cellulosome-anchoring protein (447 aa).

A signal peptide spans 1-29 (MKRIKRILAVLTIFALLATINAFTFVSLA). Residues 30 to 180 (QTNTIEIIIG…EIIEASAPEA (151 aa)) enclose the Cohesin domain. Residues 30–180 (QTNTIEIIIG…EIIEASAPEA (151 aa)) form a receptor binding site for duplicated segment of CipA region. The interval 177–247 (APEATPTPGS…EHAPFLKGYP (71 aa)) is disordered. The segment covering 188–200 (AGSGAGGGTGSSG) has biased composition (gly residues). Residues 201–223 (SGQPSATPTPTATEKPSTTPKTT) show a composition bias toward low complexity. SLH domains are found at residues 216–280 (PSTT…AGKN), 281–344 (SSIT…EQGT), and 345–408 (DVKT…GAVL). Residues 409–429 (EFTDVPVNYWAYKDIAEGVIY) form the SLH 4; truncated domain.

Its subcellular location is the secreted. The protein localises to the cell wall. It is found in the S-layer. Anchors the cellulosome to the cell surface by binding the duplicated segment that is present at the C-terminal end of CipA. The sequence is that of Cellulosome-anchoring protein (ancA) from Acetivibrio thermocellus (strain ATCC 27405 / DSM 1237 / JCM 9322 / NBRC 103400 / NCIMB 10682 / NRRL B-4536 / VPI 7372) (Clostridium thermocellum).